Reading from the N-terminus, the 334-residue chain is Ketol-acid reductoisomerase (NADP(+)) (334 aa).

Residues 1 to 181 (MNIYYDKNAD…GGGRTGILET (181 aa)) enclose the KARI N-terminal Rossmann domain. NADP(+) is bound by residues 24–27 (YGSQ), Arg47, Ser50, Ser52, and 82–85 (DEFQ). His107 is an active-site residue. Residue Gly133 participates in NADP(+) binding. In terms of domain architecture, KARI C-terminal knotted spans 182–323 (SFKDETETDL…ESLRSMMPWI (142 aa)). Residues Asp190, Glu194, Glu226, and Glu230 each contribute to the Mg(2+) site. Residue Ser251 participates in substrate binding.

It belongs to the ketol-acid reductoisomerase family. Mg(2+) is required as a cofactor.

It catalyses the reaction (2R)-2,3-dihydroxy-3-methylbutanoate + NADP(+) = (2S)-2-acetolactate + NADPH + H(+). The catalysed reaction is (2R,3R)-2,3-dihydroxy-3-methylpentanoate + NADP(+) = (S)-2-ethyl-2-hydroxy-3-oxobutanoate + NADPH + H(+). It participates in amino-acid biosynthesis; L-isoleucine biosynthesis; L-isoleucine from 2-oxobutanoate: step 2/4. It functions in the pathway amino-acid biosynthesis; L-valine biosynthesis; L-valine from pyruvate: step 2/4. Its function is as follows. Involved in the biosynthesis of branched-chain amino acids (BCAA). Catalyzes an alkyl-migration followed by a ketol-acid reduction of (S)-2-acetolactate (S2AL) to yield (R)-2,3-dihydroxy-isovalerate. In the isomerase reaction, S2AL is rearranged via a Mg-dependent methyl migration to produce 3-hydroxy-3-methyl-2-ketobutyrate (HMKB). In the reductase reaction, this 2-ketoacid undergoes a metal-dependent reduction by NADPH to yield (R)-2,3-dihydroxy-isovalerate. This is Ketol-acid reductoisomerase (NADP(+)) from Vesicomyosocius okutanii subsp. Calyptogena okutanii (strain HA).